The following is a 72-amino-acid chain: MIVPWQGLSPDTLDNLIESFVLREGTDYGEHERSLEQKVADVKRQLQSGEAVLVWSELHETVNIMPKKQFRD.

This sequence belongs to the UPF0270 family.

The sequence is that of UPF0270 protein YheU from Salmonella arizonae (strain ATCC BAA-731 / CDC346-86 / RSK2980).